Here is a 593-residue protein sequence, read N- to C-terminus: A-type ATP synthase subunit A (593 aa).

236–243 (GPFGSGKT) contacts ATP.

Belongs to the ATPase alpha/beta chains family. Has multiple subunits with at least A(3), B(3), C, D, E, F, H, I and proteolipid K(x).

The protein localises to the cell membrane. The catalysed reaction is ATP + H2O + 4 H(+)(in) = ADP + phosphate + 5 H(+)(out). In terms of biological role, produces ATP from ADP in the presence of a proton gradient across the membrane. The archaeal alpha chain is a catalytic subunit. Functionally, component of the A-type ATP synthase that produces ATP from ADP in the presence of a proton gradient across the membrane. The A chain is the catalytic subunit. This is A-type ATP synthase subunit A from Pyrobaculum aerophilum (strain ATCC 51768 / DSM 7523 / JCM 9630 / CIP 104966 / NBRC 100827 / IM2).